Reading from the N-terminus, the 819-residue chain is Myosin light chain kinase 3 (819 aa).

The disordered stretch occupies residues 146–460; the sequence is VPWRRGSPGD…PGVGNPEPEQ (315 aa). At S152 the chain carries Phosphoserine. 2 stretches are compositionally biased toward basic and acidic residues: residues 158–170 and 183–196; these read EENK…EGAK and DARE…KADV. Pro residues predominate over residues 307–318; it reads GPGPQCPGPPGL. S355, S401, and S408 each carry phosphoserine. The region spanning 515–770 is the Protein kinase domain; the sequence is VCQHEVLGGG…ATQCLKHEWL (256 aa). Residues 521–529 and K544 each bind ATP; that span reads LGGGRFGQV. Residue D636 is the Proton acceptor of the active site.

The protein belongs to the protein kinase superfamily. CAMK Ser/Thr protein kinase family. The cofactor is Mg(2+). In terms of processing, phosphorylated on serine residues.

It is found in the cytoplasm. The enzyme catalyses L-seryl-[myosin light chain] + ATP = O-phospho-L-seryl-[myosin light chain] + ADP + H(+). The catalysed reaction is L-threonyl-[myosin light chain] + ATP = O-phospho-L-threonyl-[myosin light chain] + ADP + H(+). Functionally, kinase that phosphorylates MYL2 in vitro. Promotes sarcomere formation in cardiomyocytes and increases cardiomyocyte contractility. The chain is Myosin light chain kinase 3 (MYLK3) from Pongo abelii (Sumatran orangutan).